We begin with the raw amino-acid sequence, 333 residues long: DNA-directed RNA polymerase subunit alpha (333 aa).

The interval Met1–Lys234 is alpha N-terminal domain (alpha-NTD). The segment at Ile248–Ala333 is alpha C-terminal domain (alpha-CTD).

The protein belongs to the RNA polymerase alpha chain family. As to quaternary structure, homodimer. The RNAP catalytic core consists of 2 alpha, 1 beta, 1 beta' and 1 omega subunit. When a sigma factor is associated with the core the holoenzyme is formed, which can initiate transcription.

It catalyses the reaction RNA(n) + a ribonucleoside 5'-triphosphate = RNA(n+1) + diphosphate. In terms of biological role, DNA-dependent RNA polymerase catalyzes the transcription of DNA into RNA using the four ribonucleoside triphosphates as substrates. The polypeptide is DNA-directed RNA polymerase subunit alpha (Stutzerimonas stutzeri (strain A1501) (Pseudomonas stutzeri)).